The sequence spans 223 residues: Adenylate kinase (223 aa).

An ATP-binding site is contributed by 17-22 (GAGKGT). The segment at 37–66 (STGDMLRSQVAKGTPLGVEAKKIMDQGGLV) is NMP. Residues threonine 38, arginine 43, 64 to 66 (GLV), 93 to 96 (GFPR), and glutamine 100 contribute to the AMP site. The tract at residues 134 to 171 (GRLVHPSSGRSYHKLFNPPKVEMTDDVTGEPLVQRSDD) is LID. ATP contacts are provided by residues arginine 135 and 144-145 (SY). Residues arginine 168 and arginine 179 each contribute to the AMP site. Glutamine 207 serves as a coordination point for ATP.

It belongs to the adenylate kinase family. AK2 subfamily. In terms of assembly, monomer.

It localises to the cytoplasm. It is found in the cytosol. The protein localises to the mitochondrion intermembrane space. It catalyses the reaction AMP + ATP = 2 ADP. Catalyzes the reversible transfer of the terminal phosphate group between ATP and AMP. Plays an important role in cellular energy homeostasis and in adenine nucleotide metabolism. Adenylate kinase activity is critical for regulation of the phosphate utilization and the AMP de novo biosynthesis pathways. This Vanderwaltozyma polyspora (strain ATCC 22028 / DSM 70294 / BCRC 21397 / CBS 2163 / NBRC 10782 / NRRL Y-8283 / UCD 57-17) (Kluyveromyces polysporus) protein is Adenylate kinase.